The sequence spans 437 residues: Indole diterpene prenyltransferase anaPT (437 aa).

A disordered region spans residues 1–28 (MSPLSMQTDSVQGTAENKSLETNGTSND). Residues 102–103 (GF) and Glu-111 each bind L-tryptophan. 8 residues coordinate dimethylallyl diphosphate: Arg-124, Lys-208, Tyr-210, Tyr-282, Gln-355, Tyr-357, Tyr-422, and Tyr-426.

This sequence belongs to the tryptophan dimethylallyltransferase family.

The catalysed reaction is (R)-benzodiazepinedione + dimethylallyl diphosphate = (2R,3S,11R)-aszonalenin + diphosphate. The enzyme catalyses (S)-benzodiazepinedione + dimethylallyl diphosphate = (2R,3S,11S)-aszonalenin + diphosphate. Its pathway is alkaloid biosynthesis. Functionally, indole diterpene prenyltransferase; part of the gene cluster that mediates the biosynthesis of the prenylated pyrroloindoline diketopiperazine acetylaszonalenin. The first step in the pathway is the formation of (R)-benzodiazepinedione by condensation of tryptophan and anthranilic acid catalyzed by the non-ribosomal peptide synthetase anaPS. The prenyltransferase anaPT then converts (R)-benzodiazepinedione to aszonalenin in the presence of dimethylallyl diphosphate (DMAPP) via C3-prenylation. The last step in the biosynthesis of acetylaszonalenin via acetylation of aszonalenin at position N1 catalyzed by anaAT. The chain is Indole diterpene prenyltransferase anaPT from Neosartorya fischeri (strain ATCC 1020 / DSM 3700 / CBS 544.65 / FGSC A1164 / JCM 1740 / NRRL 181 / WB 181) (Aspergillus fischerianus).